Consider the following 60-residue polypeptide: Large ribosomal subunit protein uL30 (60 aa).

Belongs to the universal ribosomal protein uL30 family. Part of the 50S ribosomal subunit.

This is Large ribosomal subunit protein uL30 from Leuconostoc mesenteroides subsp. mesenteroides (strain ATCC 8293 / DSM 20343 / BCRC 11652 / CCM 1803 / JCM 6124 / NCDO 523 / NBRC 100496 / NCIMB 8023 / NCTC 12954 / NRRL B-1118 / 37Y).